Here is a 336-residue protein sequence, read N- to C-terminus: Ultraviolet-sensitive opsin (336 aa).

The Extracellular portion of the chain corresponds to 1–29 (MDAWTYQFGNLSKISPFEGPQYHLAPKWA). N-linked (GlcNAc...) asparagine glycosylation occurs at Asn10. Residues 30 to 54 (FYLQAAFMGFVFFVGTPLNAIVLFV) traverse the membrane as a helical segment. Residues 55 to 66 (TMKYKKLRQPLN) lie on the Cytoplasmic side of the membrane. The chain crosses the membrane as a helical span at residues 67–91 (YILVNISLGGFIFDTFSVSQVFFSA). Over 92-106 (LRGYYFFGYTLCAME) the chain is Extracellular. Residues Cys103 and Cys180 are joined by a disulfide bond. The chain crosses the membrane as a helical span at residues 107-126 (AAMGSIAGLVTGWSLAVLAF). The Cytoplasmic portion of the chain corresponds to 127–145 (ERYVVICKPFGSFKFGQSQ). Residues 146 to 169 (ALGAVALTWIIGIGCATPPFWGWS) traverse the membrane as a helical segment. Over 170–195 (RYIPEGIGTACGPDWYTKNEEYNTES) the chain is Extracellular. The helical transmembrane segment at 196–223 (YTYFLLVSCFMMPIMIITFSYSQLLGAL) threads the bilayer. Residues 224-245 (RAVAAQQAESASTQKAEKEVSR) are Cytoplasmic-facing. A helical transmembrane segment spans residues 246–269 (MVVVMVGSFVVCYGPYAITALYFS). Topologically, residues 270–277 (YAEDSNKD) are extracellular. A helical membrane pass occupies residues 278-302 (YRLVAIPSLFSKSSCVYNPLIYAFM). Lys289 carries the N6-(retinylidene)lysine modification. Residues 303–336 (NKQFNACIMETVFGKKIDESSEVSSKTETSSVSA) lie on the Cytoplasmic side of the membrane.

This sequence belongs to the G-protein coupled receptor 1 family. Opsin subfamily. Post-translationally, phosphorylated on some or all of the serine and threonine residues present in the C-terminal region.

It localises to the membrane. Functionally, visual pigments are the light-absorbing molecules that mediate vision. They consist of an apoprotein, opsin, covalently linked to cis-retinal. This chain is Ultraviolet-sensitive opsin, found in Carassius auratus (Goldfish).